We begin with the raw amino-acid sequence, 42 residues long: Packaging protein P20 (42 aa).

A helical membrane pass occupies residues 11 to 31; the sequence is INWLIVILMLTIAGMAATLVC.

As to quaternary structure, heterodimer of P20 and P22; further multimerizes as hexamers of heterodimers. Part of the dodecameric portal complex that is composed of the packaging efficiency factor P6, the DNA packaging ATPase P9, and the internal heterododecamer P20/P22 which spans the virion inner membrane.

The protein resides in the virion membrane. In terms of biological role, together with P22, forms the internal part of the portal complex embeded in the virion internal membrane and which plays critical roles in genome packaging and genome ejection. Both proteins multimerize as a single ring-shaped heterdodecamer arranged around a central channel and interact with the P6/P9 external part of the portal. The sequence is that of Packaging protein P20 (XX) from Acinetobacter calcoaceticus (Arthrobacter siderocapsulatus).